Here is a 158-residue protein sequence, read N- to C-terminus: Glycine/sarcosine/betaine reductase complex component A (158 aa).

Sec-44 is an active-site residue. A non-standard amino acid (selenocysteine) is located at residue Sec-44.

The protein belongs to the GrdA family. In terms of assembly, monomer. Component of the glycine, sarcosine and betaine reductase complexes, together with components B and C.

It carries out the reaction acetyl phosphate + [thioredoxin]-disulfide + NH4(+) + H2O = [thioredoxin]-dithiol + glycine + phosphate + H(+). It catalyses the reaction acetyl phosphate + methylamine + [thioredoxin]-disulfide + H2O = sarcosine + [thioredoxin]-dithiol + phosphate + H(+). The enzyme catalyses acetyl phosphate + trimethylamine + [thioredoxin]-disulfide + H2O = glycine betaine + [thioredoxin]-dithiol + phosphate + H(+). Its function is as follows. In the first step of glycine, betaine and sarcosine reductases, the substrate is bound to component PB via a Schiff base intermediate. Then the PB-activated substrate is nucleophilically attacked by the selenol anion of component PA to transform it to a carboxymethylated selenoether and the respective amine. By action of component PC, acetyl phosphate is formed, leaving component PA in its oxidized state. Finally component PA becomes reduced by the thioredoxin system to start a new catalytic cycle of reductive deamination. The sequence is that of Glycine/sarcosine/betaine reductase complex component A from Alkaliphilus metalliredigens (strain QYMF).